Reading from the N-terminus, the 1131-residue chain is PPi-type phosphoenolpyruvate carboxykinase (1131 aa).

It belongs to the PPi-type phosphoenolpyruvate carboxykinase family. Monomer and trimer; forms heterotrimers with PEPCK2 and PEPCK3.

It catalyses the reaction oxaloacetate + diphosphate = phosphoenolpyruvate + phosphate + CO2. Its function is as follows. Inorganic pyrophosphate (PPi)-dependent phosphoenolpyruvate carboxykinase, which regulates the carbon flow of the central metabolism by fixing CO(2) to phosphoenolpyruvate to produce oxaloacetate. Can also produce pyruvate and diphosphate from phosphoenolpyruvate and phosphate. The polypeptide is PPi-type phosphoenolpyruvate carboxykinase (Propionibacterium freudenreichii subsp. freudenreichii).